Consider the following 224-residue polypeptide: Adenylate kinase (224 aa).

10 to 15 provides a ligand contact to ATP; it reads GSGKST. The segment at 30–59 is NMP; the sequence is SSGDMIRAEIEKGSELGKELKKYLAKGELI. AMP contacts are provided by residues Ser-31, Arg-36, 57–59, 83–86, and Gln-90; these read ELI and GYPR. Residues 124–161 form an LID region; the sequence is GRRICPKCGAVYHLRYRPPKVPGKCDLCGSQLIQREDD. An ATP-binding site is contributed by Arg-125. Zn(2+) contacts are provided by Cys-128 and Cys-131. 134–135 contacts ATP; that stretch reads VY. Zn(2+) contacts are provided by Cys-148 and Cys-151. Positions 158 and 169 each coordinate AMP. Residue Gly-197 coordinates ATP.

This sequence belongs to the adenylate kinase family. Monomer.

It localises to the cytoplasm. It carries out the reaction AMP + ATP = 2 ADP. It functions in the pathway purine metabolism; AMP biosynthesis via salvage pathway; AMP from ADP: step 1/1. In terms of biological role, catalyzes the reversible transfer of the terminal phosphate group between ATP and AMP. Plays an important role in cellular energy homeostasis and in adenine nucleotide metabolism. In Thermococcus onnurineus (strain NA1), this protein is Adenylate kinase.